We begin with the raw amino-acid sequence, 549 residues long: Glucose-6-phosphate isomerase (549 aa).

Glutamate 353 functions as the Proton donor in the catalytic mechanism. Residues histidine 384 and lysine 513 contribute to the active site.

The protein belongs to the GPI family.

It localises to the cytoplasm. The catalysed reaction is alpha-D-glucose 6-phosphate = beta-D-fructose 6-phosphate. It participates in carbohydrate biosynthesis; gluconeogenesis. The protein operates within carbohydrate degradation; glycolysis; D-glyceraldehyde 3-phosphate and glycerone phosphate from D-glucose: step 2/4. Its function is as follows. Catalyzes the reversible isomerization of glucose-6-phosphate to fructose-6-phosphate. The polypeptide is Glucose-6-phosphate isomerase (Brucella anthropi (strain ATCC 49188 / DSM 6882 / CCUG 24695 / JCM 21032 / LMG 3331 / NBRC 15819 / NCTC 12168 / Alc 37) (Ochrobactrum anthropi)).